The following is a 312-amino-acid chain: MTRTRSDSLAAGGLNWDSMPLKLFAGGNAKFWDPADIDFSKDRADWESLSNLERDWATRLCAQFIAGEEAVTQDIQPFMAAMRAEGRLGDEMYLTQFAFEEAKHTQVFRMWLDAVGMTDDLQCYLDDLPSYRQMFYEELPASLEALATDPSPAAQVRASATYNHVIEGMMALTGYYAWHRICVDRKVLPGMQELVRRIGDDERRHMAWGTFTCRRHVAADDANWEVFENRMNELIPLALSNTDDSFALYDEIPFGFAKEEFQQYAADKGMRRFGTISSARGRALAEIDVDYSPLQLEDTFAAEDSRVLATSA.

Residues Glu-68, Glu-101, and His-104 each contribute to the Mn(2+) site. The segment at residues 71-162 (VTQDIQPFMA…AAQVRASATY (92 aa)) is a cross-link (3-(O4'-tyrosyl)-valine (Val-Tyr)). Glu-101 is a binding site for Fe cation. Fe cation contacts are provided by Glu-167, Glu-202, and His-205.

Belongs to the ribonucleoside diphosphate reductase small chain family. R2-like ligand binding oxidase subfamily. Homodimer. Fe cation serves as cofactor. Mn(2+) is required as a cofactor.

Its function is as follows. Probable oxidase that might be involved in lipid metabolism. This is R2-like ligand binding oxidase from Mycobacterium sp. (strain JLS).